Consider the following 318-residue polypeptide: Retinol dehydrogenase 11 (318 aa).

The helical; Signal-anchor for type II membrane protein transmembrane segment at 1–21 (MVELMFPLLLLLLPFLLYMAA) threads the bilayer. Residues 22 to 318 (PQIRKMLSSG…SCDLLGLPID (297 aa)) lie on the Cytoplasmic side of the membrane. 48–54 (GANTGIG) contributes to the NADP(+) binding site. N6-acetyllysine is present on lysine 112. Serine 177 contacts substrate. The active-site Proton acceptor is tyrosine 202.

This sequence belongs to the short-chain dehydrogenases/reductases (SDR) family. Interacts with SELENOF. Not glycosylated. As to expression, predominantly expressed in the epithelial cells of prostate, in both basal and luminal secretory cell populations. Expressed at low levels in spleen, thymus, testis, ovary, small intestine, colon, peripherical blood leukocytes, kidney, adrenal gland and fetal liver. Not detected in prostatic fibromuscular stromal cells, endothelial cells, or infiltrating lymphocytes.

The protein resides in the endoplasmic reticulum membrane. It catalyses the reaction all-trans-retinol + NADP(+) = all-trans-retinal + NADPH + H(+). The catalysed reaction is 11-cis-retinol + NADP(+) = 11-cis-retinal + NADPH + H(+). The enzyme catalyses 9-cis-retinol + NADP(+) = 9-cis-retinal + NADPH + H(+). It carries out the reaction 13-cis-retinol + NADP(+) = 13-cis-retinal + NADPH + H(+). The protein operates within cofactor metabolism; retinol metabolism. Its activity is regulated as follows. SELENOF decreases the retinol dehydrogenase activity. Functionally, retinol dehydrogenase with a clear preference for NADP. Displays high activity towards 9-cis, 11-cis and all-trans-retinol, and to a lesser extent on 13-cis-retinol. Exhibits a low reductive activity towards unsaturated medium-chain aldehydes such as cis -6-nonenal and no activity toward nonanal or 4-hydroxy-nonenal. Has no dehydrogenase activity towards steroid. The protein is Retinol dehydrogenase 11 (RDH11) of Homo sapiens (Human).